Here is a 97-residue protein sequence, read N- to C-terminus: Co-chaperonin GroES (97 aa).

This sequence belongs to the GroES chaperonin family. Heptamer of 7 subunits arranged in a ring. Interacts with the chaperonin GroEL.

It is found in the cytoplasm. Together with the chaperonin GroEL, plays an essential role in assisting protein folding. The GroEL-GroES system forms a nano-cage that allows encapsulation of the non-native substrate proteins and provides a physical environment optimized to promote and accelerate protein folding. GroES binds to the apical surface of the GroEL ring, thereby capping the opening of the GroEL channel. In Buchnera aphidicola subsp. Tetraneura caerulescens, this protein is Co-chaperonin GroES.